The primary structure comprises 1530 residues: Synaptonemal complex protein 2 (1530 aa).

Basic and acidic residues predominate over residues 439-461 (EKSKSPKEFAKPSKYIKNSDKGN). Positions 439-480 (EKSKSPKEFAKPSKYIKNSDKGNRNNSQLEKTTPSKRKMSEA) are disordered. Ser-457 and Ser-465 each carry phosphoserine. At Thr-471 the chain carries Phosphothreonine. A phosphoserine mark is found at Ser-494, Ser-519, Ser-529, and Ser-538. The disordered stretch occupies residues 496 to 555 (VLFSNTSIPPRRRRIKPPLQMTSSAEKPSVSQTSENRVDNAASLKSRSSEGRHRRDNIDK). A compositionally biased stretch (polar residues) spans 515-530 (QMTSSAEKPSVSQTSE). A compositionally biased stretch (basic and acidic residues) spans 542-555 (RSSEGRHRRDNIDK). A Phosphothreonine modification is found at Thr-619. Disordered stretches follow at residues 653–676 (QKSS…KKEQ), 693–717 (HNQQ…SDWP), and 755–795 (DKNP…SKGK). Phosphoserine is present on residues Ser-660 and Ser-664. Polar residues-rich tracts occupy residues 695–713 (QQQN…NAKQ) and 755–764 (DKNPSASKNV). A Phosphoserine modification is found at Ser-936. The residue at position 938 (Thr-938) is a Phosphothreonine. Residues 962–1003 (QLIDYSRNKNVKNHKSGKSRSSLEKGQPSSKMTPSKNITKKM) are disordered. A compositionally biased stretch (basic residues) spans 970–979 (KNVKNHKSGK). Polar residues predominate over residues 988-998 (QPSSKMTPSKN). Residues Ser-1136, Ser-1138, Ser-1145, Ser-1161, and Ser-1177 each carry the phosphoserine modification. A Phosphothreonine modification is found at Thr-1189. Phosphoserine occurs at positions 1204, 1234, 1253, 1295, and 1297. Residue Thr-1339 is modified to Phosphothreonine.

Belongs to the SYCP2 family. Component of the lateral elements of synaptonemal complexes. Heterodimer with SYCP3. Interacts with SMC1A and SMC3. Interacts with TEX11. Post-translationally, phosphorylated.

It localises to the nucleus. It is found in the chromosome. In terms of biological role, major component of the axial/lateral elements of synaptonemal complexes (SCS) during meiotic prophase. Plays a role in the assembly of synaptonemal complexes. Required for normal meiotic chromosome synapsis during oocyte and spermatocyte development and for normal male and female fertility. Required for insertion of SYCP3 into synaptonemal complexes. May be involved in the organization of chromatin by temporarily binding to DNA scaffold attachment regions. Requires SYCP3, but not SYCP1, in order to be incorporated into the axial/lateral elements. The chain is Synaptonemal complex protein 2 (SYCP2) from Homo sapiens (Human).